The chain runs to 150 residues: Allograft inflammatory factor 1-like (150 aa).

The residue at position 2 (serine 2) is an N-acetylserine. Serine 2 is subject to Phosphoserine. The EF-hand 1 domain maps to 47-82; it reads EKLAAFKEKYMEFDLNNEGEIDLMSLKRMMEKLGVP. Aspartate 60, asparagine 62, glutamate 64, and glutamate 66 together coordinate Ca(2+). Residues 83 to 117 form the EF-hand 2; degenerate domain; the sequence is KTHLEMKKMISEVTGGVSDTISYRDFVNMMLGKRS. The segment at 129 to 150 is disordered; that stretch reads KANESSPKPAGPPPERDIASLP. Position 134 is a phosphoserine (serine 134).

In terms of assembly, homodimer (Potential). Monomer.

The protein localises to the cytoplasm. It is found in the cytoskeleton. Its subcellular location is the cell projection. It localises to the ruffle membrane. Functionally, actin-binding protein that promotes actin bundling. May neither bind calcium nor depend on calcium for function. This is Allograft inflammatory factor 1-like (Aif1l) from Mus musculus (Mouse).